A 459-amino-acid polypeptide reads, in one-letter code: Exodeoxyribonuclease 7 large subunit (459 aa).

The protein belongs to the XseA family. As to quaternary structure, heterooligomer composed of large and small subunits.

Its subcellular location is the cytoplasm. It catalyses the reaction Exonucleolytic cleavage in either 5'- to 3'- or 3'- to 5'-direction to yield nucleoside 5'-phosphates.. In terms of biological role, bidirectionally degrades single-stranded DNA into large acid-insoluble oligonucleotides, which are then degraded further into small acid-soluble oligonucleotides. This chain is Exodeoxyribonuclease 7 large subunit, found in Pseudomonas aeruginosa (strain LESB58).